The primary structure comprises 124 residues: Acidic phospholipase A2 BA2 (124 aa).

Cystine bridges form between C26–C116, C28–C44, C43–C95, C49–C124, C50–C88, C57–C81, and C75–C86. Ca(2+)-binding residues include Y27, G29, and G31. The active site involves H47. D48 lines the Ca(2+) pocket. Residue D89 is part of the active site.

Belongs to the phospholipase A2 family. Group II subfamily. D49 sub-subfamily. The cofactor is Ca(2+). Expressed by the venom gland.

It is found in the secreted. The enzyme catalyses a 1,2-diacyl-sn-glycero-3-phosphocholine + H2O = a 1-acyl-sn-glycero-3-phosphocholine + a fatty acid + H(+). In terms of biological role, PLA2 catalyzes the calcium-dependent hydrolysis of the 2-acyl groups in 3-sn-phosphoglycerides. This is Acidic phospholipase A2 BA2 from Gloydius halys (Chinese water mocassin).